The primary structure comprises 250 residues: NADH-quinone oxidoreductase subunit C (250 aa).

It belongs to the complex I 30 kDa subunit family. NDH-1 is composed of 14 different subunits. Subunits NuoB, C, D, E, F, and G constitute the peripheral sector of the complex.

It is found in the cell inner membrane. It carries out the reaction a quinone + NADH + 5 H(+)(in) = a quinol + NAD(+) + 4 H(+)(out). Its function is as follows. NDH-1 shuttles electrons from NADH, via FMN and iron-sulfur (Fe-S) centers, to quinones in the respiratory chain. The immediate electron acceptor for the enzyme in this species is believed to be ubiquinone. Couples the redox reaction to proton translocation (for every two electrons transferred, four hydrogen ions are translocated across the cytoplasmic membrane), and thus conserves the redox energy in a proton gradient. The sequence is that of NADH-quinone oxidoreductase subunit C from Xanthomonas euvesicatoria pv. vesicatoria (strain 85-10) (Xanthomonas campestris pv. vesicatoria).